We begin with the raw amino-acid sequence, 1125 residues long: Exportin-6 (1125 aa).

Position 2 is an N-acetylalanine (alanine 2). An Importin N-terminal domain is found at 31–97 (IEELLNNFAQ…RSCLPKLLLA (67 aa)). Residue serine 199 is modified to Phosphoserine. Phosphothreonine is present on residues threonine 201 and threonine 204. 2 positions are modified to phosphoserine: serine 208 and serine 224.

This sequence belongs to the exportin family. Found in a complex with XPO6, Ran, ACTB and PFN1. Interacts with ACTB. Interacts with ACTB in a RanGTP-dependent manner.

The protein resides in the nucleus. It is found in the cytoplasm. Its function is as follows. Mediates the nuclear export of actin and profilin-actin complexes in somatic cells. In Mus musculus (Mouse), this protein is Exportin-6 (Xpo6).